A 416-amino-acid chain; its full sequence is Nonsense-mediated decay protein 4 (416 aa).

Disordered stretches follow at residues 1–21 (MSLY…NYHD), 195–218 (QHPI…YNNS), and 356–393 (DRPS…ANGD). Residues 12 to 21 (EARKNSNYHD) are compositionally biased toward basic and acidic residues. Basic residues predominate over residues 360 to 375 (KSKNKNKNKNTKKSTK).

The protein localises to the cytoplasm. Involved in nonsense-mediated decay of mRNAs containing premature stop codons. The sequence is that of Nonsense-mediated decay protein 4 (NMD4) from Debaryomyces hansenii (strain ATCC 36239 / CBS 767 / BCRC 21394 / JCM 1990 / NBRC 0083 / IGC 2968) (Yeast).